Reading from the N-terminus, the 190-residue chain is Zinc metalloproteinase/disintegrin (190 aa).

Residues 1 to 11 (NHNPECIVNEP) form the Peptidase M12B domain. One can recognise a Disintegrin domain in the interval 19–105 (PPVCGNELLE…ECPADVFHKN (87 aa)). Residues Val21, Asn24, Leu26, Glu28, Glu31, and Asp34 each contribute to the Ca(2+) site. Intrachain disulfides connect Cys33–Cys51, Cys35–Cys46, Cys45–Cys68, Cys59–Cys65, Cys64–Cys90, and Cys77–Cys97. Residues 83–85 (ECD) carry the D/ECD-tripeptide motif. The Ca(2+) site is built by Asp85, Pro86, Glu88, Asp100, and Val101. The propeptide occupies 104-190 (KNGQPCLDNY…DNSPGQNGPC (87 aa)).

This sequence belongs to the venom metalloproteinase (M12B) family. P-III subfamily. In terms of assembly, monomer. Zn(2+) is required as a cofactor. As to expression, expressed by the venom gland.

It is found in the secreted. Functionally, impairs hemostasis in the envenomed animal. Inhibits platelet aggregation induced by ADP, thrombin, platelet-activating factor and collagen. Acts by inhibiting fibrinogen interaction with platelet receptors GPIIb/GPIIIa (ITGA2B/ITGB3). The polypeptide is Zinc metalloproteinase/disintegrin (Gloydius brevicauda (Korean slamosa snake)).